A 333-amino-acid polypeptide reads, in one-letter code: Ketol-acid reductoisomerase (NADP(+)) (333 aa).

The 181-residue stretch at 2–182 folds into the KARI N-terminal Rossmann domain; sequence AELFYDADAD…GGTRAGVIKT (181 aa). NADP(+) is bound by residues 25-28, Ser-51, Ser-53, and 83-86; these read YGSQ and DPIQ. Residue His-108 is part of the active site. Gly-134 contributes to the NADP(+) binding site. Residues 183–328 form the KARI C-terminal knotted domain; that stretch reads TFTEETETDL…KELRKLMSWV (146 aa). Mg(2+)-binding residues include Asp-191, Glu-195, Glu-227, and Glu-231. Residue Ser-252 participates in substrate binding.

This sequence belongs to the ketol-acid reductoisomerase family. It depends on Mg(2+) as a cofactor.

The catalysed reaction is (2R)-2,3-dihydroxy-3-methylbutanoate + NADP(+) = (2S)-2-acetolactate + NADPH + H(+). It carries out the reaction (2R,3R)-2,3-dihydroxy-3-methylpentanoate + NADP(+) = (S)-2-ethyl-2-hydroxy-3-oxobutanoate + NADPH + H(+). Its pathway is amino-acid biosynthesis; L-isoleucine biosynthesis; L-isoleucine from 2-oxobutanoate: step 2/4. It participates in amino-acid biosynthesis; L-valine biosynthesis; L-valine from pyruvate: step 2/4. Its function is as follows. Involved in the biosynthesis of branched-chain amino acids (BCAA). Catalyzes an alkyl-migration followed by a ketol-acid reduction of (S)-2-acetolactate (S2AL) to yield (R)-2,3-dihydroxy-isovalerate. In the isomerase reaction, S2AL is rearranged via a Mg-dependent methyl migration to produce 3-hydroxy-3-methyl-2-ketobutyrate (HMKB). In the reductase reaction, this 2-ketoacid undergoes a metal-dependent reduction by NADPH to yield (R)-2,3-dihydroxy-isovalerate. The sequence is that of Ketol-acid reductoisomerase (NADP(+)) from Streptomyces avermitilis (strain ATCC 31267 / DSM 46492 / JCM 5070 / NBRC 14893 / NCIMB 12804 / NRRL 8165 / MA-4680).